Here is a 127-residue protein sequence, read N- to C-terminus: MRHRNSGRSFSRTSSHRKAMFSNMCCSLIEHELIRTTLPKAKDLRRYIEPLITVSKSDSVASRRRAFNILRSKSAVGKLFTDLGPRFAKRPGGYIRIIKCGYRDGDNAPMAIVELMDRPVSSDDTEE.

This sequence belongs to the bacterial ribosomal protein bL17 family. As to quaternary structure, part of the 50S ribosomal subunit. Contacts protein L32.

The chain is Large ribosomal subunit protein bL17 from Legionella pneumophila (strain Paris).